The sequence spans 675 residues: Transmembrane protein 232 (675 aa).

A helical transmembrane segment spans residues 163 to 183 (LVKIGYLIFLRLFVFFLHGHL). Positions 598–634 (WQKDMEARKREEEAYKAQNQKDKEEKEKIHFQEIMKQ) form a coiled coil. The interval 605–624 (RKREEEAYKAQNQKDKEEKE) is disordered.

In terms of tissue distribution, high expression in the testis and weak expression levels in the spleen, liver, brain, uterus, lung, epididymis and kidney. Not detected in the heart or ovary.

It is found in the membrane. In terms of biological role, plays a critical role for male fertility and sperm motility by regulating sperm cytoplasm removal and maintaining axoneme integrity. The sequence is that of Transmembrane protein 232 (Tmem232) from Mus musculus (Mouse).